A 710-amino-acid chain; its full sequence is Probable thimet oligopeptidase (710 aa).

H502 provides a ligand contact to Zn(2+). E503 is a catalytic residue. H506 serves as a coordination point for Zn(2+).

This sequence belongs to the peptidase M3 family. Zn(2+) serves as cofactor.

It localises to the cytoplasm. The enzyme catalyses Preferential cleavage of bonds with hydrophobic residues at P1, P2 and P3' and a small residue at P1' in substrates of 5 to 15 residues.. Its function is as follows. Involved in cytoplasmic peptide degradation. The polypeptide is Probable thimet oligopeptidase (Arabidopsis thaliana (Mouse-ear cress)).